Consider the following 88-residue polypeptide: Small ribosomal subunit protein uS15 (88 aa).

It belongs to the universal ribosomal protein uS15 family. In terms of assembly, part of the 30S ribosomal subunit. Forms a bridge to the 50S subunit in the 70S ribosome, contacting the 23S rRNA.

Functionally, one of the primary rRNA binding proteins, it binds directly to 16S rRNA where it helps nucleate assembly of the platform of the 30S subunit by binding and bridging several RNA helices of the 16S rRNA. In terms of biological role, forms an intersubunit bridge (bridge B4) with the 23S rRNA of the 50S subunit in the ribosome. The polypeptide is Small ribosomal subunit protein uS15 (Acidobacterium capsulatum (strain ATCC 51196 / DSM 11244 / BCRC 80197 / JCM 7670 / NBRC 15755 / NCIMB 13165 / 161)).